We begin with the raw amino-acid sequence, 129 residues long: Glycine cleavage system H protein (129 aa).

Positions 24–106 (TFTVGISEHA…YGDGWLFRIK (83 aa)) constitute a Lipoyl-binding domain. Residue lysine 65 is modified to N6-lipoyllysine.

This sequence belongs to the GcvH family. In terms of assembly, the glycine cleavage system is composed of four proteins: P, T, L and H. Requires (R)-lipoate as cofactor.

Its function is as follows. The glycine cleavage system catalyzes the degradation of glycine. The H protein shuttles the methylamine group of glycine from the P protein to the T protein. In Idiomarina loihiensis (strain ATCC BAA-735 / DSM 15497 / L2-TR), this protein is Glycine cleavage system H protein.